Here is a 479-residue protein sequence, read N- to C-terminus: Aspartyl/glutamyl-tRNA(Asn/Gln) amidotransferase subunit B (479 aa).

This sequence belongs to the GatB/GatE family. GatB subfamily. In terms of assembly, heterotrimer of A, B and C subunits.

It catalyses the reaction L-glutamyl-tRNA(Gln) + L-glutamine + ATP + H2O = L-glutaminyl-tRNA(Gln) + L-glutamate + ADP + phosphate + H(+). The catalysed reaction is L-aspartyl-tRNA(Asn) + L-glutamine + ATP + H2O = L-asparaginyl-tRNA(Asn) + L-glutamate + ADP + phosphate + 2 H(+). Its function is as follows. Allows the formation of correctly charged Asn-tRNA(Asn) or Gln-tRNA(Gln) through the transamidation of misacylated Asp-tRNA(Asn) or Glu-tRNA(Gln) in organisms which lack either or both of asparaginyl-tRNA or glutaminyl-tRNA synthetases. The reaction takes place in the presence of glutamine and ATP through an activated phospho-Asp-tRNA(Asn) or phospho-Glu-tRNA(Gln). In Streptococcus uberis (strain ATCC BAA-854 / 0140J), this protein is Aspartyl/glutamyl-tRNA(Asn/Gln) amidotransferase subunit B.